A 168-amino-acid polypeptide reads, in one-letter code: Gamma-glutamylaminecyclotransferase (168 aa).

The disordered stretch occupies residues 1-20 (MPGPECKWSTTETGAPCGTD). 32-35 (YGTL) contacts substrate. The active-site Proton acceptor is glutamate 107.

The protein belongs to the gamma-glutamylcyclotransferase family. Monomer.

It carries out the reaction epsilon-(gamma-L-glutamyl)-L-lysine = 5-oxo-L-proline + L-lysine. Contributes to degradation of proteins cross-linked by transglutaminases by degrading the cross-link between a lysine and a glutamic acid residue. Catalyzes the formation of 5-oxo-L-proline from L-gamma-glutamyl-L-epsilon-lysine. Inactive with L-gamma-glutamyl-alpha-amino acid substrates such as L-gamma-glutamyl-L-alpha-cysteine and L-gamma-glutamyl-L-alpha-alanine. The protein is Gamma-glutamylaminecyclotransferase (GGACT) of Bos taurus (Bovine).